We begin with the raw amino-acid sequence, 234 residues long: Probable Ufm1-specific protease 1 (234 aa).

Catalysis depends on residues C70, D194, and H196.

The protein belongs to the peptidase C78 family.

In terms of biological role, thiol protease which recognizes and hydrolyzes the peptide bond at the C-terminal Gly of UFM1, a ubiquitin-like modifier protein bound to a number of target proteins. The protein is Probable Ufm1-specific protease 1 of Drosophila melanogaster (Fruit fly).